Here is a 363-residue protein sequence, read N- to C-terminus: Probable dual-specificity RNA methyltransferase RlmN (363 aa).

Catalysis depends on Glu106, which acts as the Proton acceptor. Residues 112–345 (HEYGNSVCVT…VTIRREQGHD (234 aa)) form the Radical SAM core domain. A disulfide bond links Cys119 and Cys350. [4Fe-4S] cluster is bound by residues Cys126, Cys130, and Cys133. S-adenosyl-L-methionine-binding positions include 176–177 (GE), Ser208, 231–233 (SLH), and Asn307. The active-site S-methylcysteine intermediate is Cys350.

It belongs to the radical SAM superfamily. RlmN family. [4Fe-4S] cluster is required as a cofactor.

Its subcellular location is the cytoplasm. It carries out the reaction adenosine(2503) in 23S rRNA + 2 reduced [2Fe-2S]-[ferredoxin] + 2 S-adenosyl-L-methionine = 2-methyladenosine(2503) in 23S rRNA + 5'-deoxyadenosine + L-methionine + 2 oxidized [2Fe-2S]-[ferredoxin] + S-adenosyl-L-homocysteine. The catalysed reaction is adenosine(37) in tRNA + 2 reduced [2Fe-2S]-[ferredoxin] + 2 S-adenosyl-L-methionine = 2-methyladenosine(37) in tRNA + 5'-deoxyadenosine + L-methionine + 2 oxidized [2Fe-2S]-[ferredoxin] + S-adenosyl-L-homocysteine. Functionally, specifically methylates position 2 of adenine 2503 in 23S rRNA and position 2 of adenine 37 in tRNAs. The chain is Probable dual-specificity RNA methyltransferase RlmN from Bacillus velezensis (strain DSM 23117 / BGSC 10A6 / LMG 26770 / FZB42) (Bacillus amyloliquefaciens subsp. plantarum).